Consider the following 240-residue polypeptide: tRNA (guanine-N(1)-)-methyltransferase (240 aa).

S-adenosyl-L-methionine is bound by residues glycine 108 and 127–132 (IGDYVL).

It belongs to the RNA methyltransferase TrmD family. As to quaternary structure, homodimer.

It is found in the cytoplasm. The enzyme catalyses guanosine(37) in tRNA + S-adenosyl-L-methionine = N(1)-methylguanosine(37) in tRNA + S-adenosyl-L-homocysteine + H(+). In terms of biological role, specifically methylates guanosine-37 in various tRNAs. The protein is tRNA (guanine-N(1)-)-methyltransferase of Lactobacillus johnsonii (strain CNCM I-12250 / La1 / NCC 533).